The following is a 202-amino-acid chain: ATP-dependent Clp protease proteolytic subunit (202 aa).

The Nucleophile role is filled by serine 101. The active site involves histidine 126.

It belongs to the peptidase S14 family. In terms of assembly, component of the chloroplastic Clp protease core complex.

Its subcellular location is the plastid. It is found in the chloroplast stroma. The enzyme catalyses Hydrolysis of proteins to small peptides in the presence of ATP and magnesium. alpha-casein is the usual test substrate. In the absence of ATP, only oligopeptides shorter than five residues are hydrolyzed (such as succinyl-Leu-Tyr-|-NHMec, and Leu-Tyr-Leu-|-Tyr-Trp, in which cleavage of the -Tyr-|-Leu- and -Tyr-|-Trp bonds also occurs).. Its function is as follows. Cleaves peptides in various proteins in a process that requires ATP hydrolysis. Has a chymotrypsin-like activity. Plays a major role in the degradation of misfolded proteins. This Nuphar advena (Common spatterdock) protein is ATP-dependent Clp protease proteolytic subunit.